We begin with the raw amino-acid sequence, 358 residues long: Methylthioribose-1-phosphate isomerase (358 aa).

Substrate contacts are provided by residues 54 to 56, R96, and Q205; that span reads RGA. Residue D246 is the Proton donor of the active site. Residue 256–257 participates in substrate binding; that stretch reads GK.

It belongs to the eIF-2B alpha/beta/delta subunits family. MtnA subfamily.

The enzyme catalyses 5-(methylsulfanyl)-alpha-D-ribose 1-phosphate = 5-(methylsulfanyl)-D-ribulose 1-phosphate. It participates in amino-acid biosynthesis; L-methionine biosynthesis via salvage pathway; L-methionine from S-methyl-5-thio-alpha-D-ribose 1-phosphate: step 1/6. Functionally, catalyzes the interconversion of methylthioribose-1-phosphate (MTR-1-P) into methylthioribulose-1-phosphate (MTRu-1-P). This is Methylthioribose-1-phosphate isomerase from Pseudomonas putida (strain ATCC 47054 / DSM 6125 / CFBP 8728 / NCIMB 11950 / KT2440).